Consider the following 279-residue polypeptide: Pleckstrin homology domain-containing family F member 1 (279 aa).

One can recognise a PH domain in the interval 35–131 (VLLGEGVLTK…WISHIEECVR (97 aa)). The segment at 152–212 (DKATDICMRC…VCSLCYRELA (61 aa)) adopts an FYVE-type zinc-finger fold. The Zn(2+) site is built by Cys-158, Cys-161, Cys-175, Cys-178, Cys-183, Cys-186, Cys-204, and Cys-207. The interval 220 to 263 (AREGIGGSPPQLSHLGGTVCGASSGDDDDSDEDREGNGDGDWPT) is disordered. Residues 244–253 (GDDDDSDEDR) are compositionally biased toward acidic residues.

In terms of tissue distribution, widely expressed.

The protein resides in the nucleus. The protein localises to the cytoplasm. Its subcellular location is the perinuclear region. It is found in the lysosome. Functionally, may induce apoptosis through the lysosomal-mitochondrial pathway. Translocates to the lysosome initiating the permeabilization of lysosomal membrane (LMP) and resulting in the release of CTSD and CTSL to the cytoplasm. Triggers the caspase-independent apoptosis by altering mitochondrial membrane permeabilization (MMP) resulting in the release of PDCD8. The chain is Pleckstrin homology domain-containing family F member 1 (Plekhf1) from Mus musculus (Mouse).